We begin with the raw amino-acid sequence, 378 residues long: Bifunctional enzyme IspD/IspF (378 aa).

The 2-C-methyl-D-erythritol 4-phosphate cytidylyltransferase stretch occupies residues 1–222 (MTETVAIIVA…RLLSPTGAPR (222 aa)). The interval 222-378 (RIGKGYDVHE…EAVALLMPKG (157 aa)) is 2-C-methyl-D-erythritol 2,4-cyclodiphosphate synthase. Residues Asp-228 and His-230 each coordinate a divalent metal cation. Residues 228 to 230 (DVH) and 254 to 255 (HS) contribute to the 4-CDP-2-C-methyl-D-erythritol 2-phosphate site. His-262 lines the a divalent metal cation pocket. Residues 276-278 (DIG), 352-355 (TTTE), Phe-359, and Arg-362 each bind 4-CDP-2-C-methyl-D-erythritol 2-phosphate.

In the N-terminal section; belongs to the IspD/TarI cytidylyltransferase family. IspD subfamily. It in the C-terminal section; belongs to the IspF family. The cofactor is a divalent metal cation.

The catalysed reaction is 2-C-methyl-D-erythritol 4-phosphate + CTP + H(+) = 4-CDP-2-C-methyl-D-erythritol + diphosphate. The enzyme catalyses 4-CDP-2-C-methyl-D-erythritol 2-phosphate = 2-C-methyl-D-erythritol 2,4-cyclic diphosphate + CMP. The protein operates within isoprenoid biosynthesis; isopentenyl diphosphate biosynthesis via DXP pathway; isopentenyl diphosphate from 1-deoxy-D-xylulose 5-phosphate: step 2/6. It participates in isoprenoid biosynthesis; isopentenyl diphosphate biosynthesis via DXP pathway; isopentenyl diphosphate from 1-deoxy-D-xylulose 5-phosphate: step 4/6. Functionally, bifunctional enzyme that catalyzes the formation of 4-diphosphocytidyl-2-C-methyl-D-erythritol from CTP and 2-C-methyl-D-erythritol 4-phosphate (MEP) (IspD), and catalyzes the conversion of 4-diphosphocytidyl-2-C-methyl-D-erythritol 2-phosphate (CDP-ME2P) to 2-C-methyl-D-erythritol 2,4-cyclodiphosphate (ME-CPP) with a corresponding release of cytidine 5-monophosphate (CMP) (IspF). The polypeptide is Bifunctional enzyme IspD/IspF (Hyphomonas neptunium (strain ATCC 15444)).